A 113-amino-acid chain; its full sequence is uncharacterized protein (113 aa).

Positions 1 to 29 are cleaved as a signal peptide; that stretch reads MLVVYMCIWVLYLLLFLFLFLFIASPASL. 2 helical membrane passes run 34 to 54 and 56 to 76; these read THIL…CAFF and QVLC…FYFF.

The protein localises to the membrane. This is an uncharacterized protein from Saccharomyces cerevisiae (strain ATCC 204508 / S288c) (Baker's yeast).